Consider the following 376-residue polypeptide: Galactoside alpha-(1,2)-fucosyltransferase 1 (376 aa).

Residues 1 to 12 (MWTPSRKQLCLA) lie on the Cytoplasmic side of the membrane. The helical; Signal-anchor for type II membrane protein transmembrane segment at 13–29 (FLSVCVLSAGSFFFHLN) threads the bilayer. Residues 30–376 (GGNFFQNALT…WETDSLFRLA (347 aa)) are Lumenal-facing. 3 N-linked (GlcNAc...) asparagine glycosylation sites follow: Asn64, Asn302, and Asn328.

It belongs to the glycosyltransferase 11 family.

The protein localises to the golgi apparatus. It is found in the golgi stack membrane. The catalysed reaction is a beta-D-galactosyl-(1-&gt;4)-N-acetyl-beta-D-glucosaminyl derivative + GDP-beta-L-fucose = an alpha-L-Fuc-(1-&gt;2)-beta-D-Gal-(1-&gt;4)-beta-D-GlcNAc derivative + GDP + H(+). The enzyme catalyses a ganglioside GA1 + GDP-beta-L-fucose = a ganglioside Fuc-GA1 + GDP + H(+). It catalyses the reaction a beta-D-Gal-(1-&gt;3)-beta-D-GlcNAc-(1-&gt;3)-beta-D-Gal-(1-&gt;4)-beta-D-Glc-(1&lt;-&gt;1')-Cer(d18:1(4E)) + GDP-beta-L-fucose = alpha-L-fucosyl-(1-&gt;2)- beta-D-galactosyl-(1-&gt;3)-N-acetyl-beta-D-glucosaminyl-(1-&gt;3)-beta-D-galactosyl-(1-&gt;4)-beta-D-glucosyl-(1&lt;-&gt;1')-N-acylsphing-4-enine + GDP + H(+). It carries out the reaction a neolactoside nLc4Cer(d18:1(4E)) + GDP-beta-L-fucose = a neolactoside IV(2)-alpha-Fuc-nLc4Cer(d18:1(4E)) + GDP + H(+). The catalysed reaction is a ganglioside GM1 + GDP-beta-L-fucose = a ganglioside Fuc-GM1 + GDP + H(+). The enzyme catalyses beta-D-galactosyl-(1-&gt;3)-N-acetyl-D-galactosamine + GDP-beta-L-fucose = alpha-L-fucosyl-(1-&gt;2)-beta-D-galactosyl-(1-&gt;3)-N-acetyl-D-galactosamine + GDP + H(+). It participates in protein modification; protein glycosylation. Functionally, catalyzes the transfer of L-fucose, from a guanosine diphosphate-beta-L-fucose, to the terminal galactose residue of glycoconjugates through an alpha(1,2) linkage leading to H antigen synthesis that is an intermediate substrate in the synthesis of ABO blood group antigens. H antigen is essential for maturation of the glomerular layer of the main olfactory bulb, in cell migration and early cell-cell contacts during tumor associated angiogenesis. Preferentially fucosylates soluble lactose and to a lesser extent fucosylates glycolipids gangliosides GA1 and GM1a. In Rattus norvegicus (Rat), this protein is Galactoside alpha-(1,2)-fucosyltransferase 1.